A 1464-amino-acid chain; its full sequence is Alpha-glucan water dikinase, chloroplastic (1464 aa).

Residues 1–77 constitute a chloroplast transit peptide; it reads MSNSLGNNLL…KRAFSSSPHA (77 aa). Catalysis depends on H1069, which acts as the Tele-phosphohistidine intermediate.

Belongs to the PEP-utilizing enzyme family. As to quaternary structure, homodimer. It depends on Mg(2+) as a cofactor. Expressed in leaves.

It localises to the plastid. The protein resides in the chloroplast. It carries out the reaction [(1-&gt;4)-alpha-D-glucosyl](n) + n ATP + n H2O = [(1-&gt;4)-6-phospho-alpha-D-glucosyl](n) + n AMP + n phosphate + 2n H(+). The enzyme catalyses ATP + protein L-histidine = ADP + protein N-phospho-L-histidine.. Its function is as follows. Mediates the incorporation of phosphate into starch-like alpha-glucan, mostly at the C-6 position of glucose units. Acts as an overall regulator of starch mobilization. Required for starch degradation, suggesting that the phosphate content of starch regulates its degradability. More active on alpha-1,6 branched amylopectin. The chain is Alpha-glucan water dikinase, chloroplastic (R1) from Solanum tuberosum (Potato).